Here is a 245-residue protein sequence, read N- to C-terminus: Transmembrane protein 116 (245 aa).

The next 4 helical transmembrane spans lie at 24-44 (MAFV…FCLG), 88-108 (GIAI…VLLI), 141-161 (FYPV…IIKL), and 173-195 (LYVL…YGWT).

The protein localises to the membrane. The polypeptide is Transmembrane protein 116 (TMEM116) (Homo sapiens (Human)).